Consider the following 202-residue polypeptide: Large ribosomal subunit protein bL9 (202 aa).

The disordered stretch occupies residues 177–202 (AGEFFDPEAEPDDVAEAGGEQTAEEK). Residues 181 to 191 (FDPEAEPDDVA) are compositionally biased toward acidic residues.

Belongs to the bacterial ribosomal protein bL9 family.

Its function is as follows. Binds to the 23S rRNA. This is Large ribosomal subunit protein bL9 from Nitrobacter hamburgensis (strain DSM 10229 / NCIMB 13809 / X14).